A 282-amino-acid polypeptide reads, in one-letter code: Ribonuclease P protein subunit p38 (282 aa).

Disordered regions lie at residues 1–21 and 61–103; these read MAAA…PLPV and EDRK…QASG. An N-acetylalanine modification is found at alanine 2. Serine 12 bears the Phosphoserine mark. Residues 88 to 97 show a composition bias toward basic and acidic residues; it reads EDLKKEKPKG. 2 positions are modified to phosphoserine: serine 226 and serine 235. The tract at residues 262–282 is disordered; that stretch reads KLIPNPNKIRKPPKSKRTASK. Over residues 269–282 the composition is skewed to basic residues; it reads KIRKPPKSKRTASK.

It belongs to the eukaryotic ribosomal protein eL8 family. As to quaternary structure, component of nuclear RNase P and RNase MRP ribonucleoproteins. RNase P consists of a catalytic RNA moiety and about 10 protein subunits; POP1, POP4, POP5, POP7, RPP14, RPP21, RPP25, RPP30, RPP38 and RPP40. Within the RNase P complex, POP1, POP7 and RPP25 form the 'finger' subcomplex, POP5, RPP14, RPP40 and homodimeric RPP30 form the 'palm' subcomplex, and RPP21, POP4 and RPP38 form the 'wrist' subcomplex. All subunits of the RNase P complex interact with the catalytic RNA. Several subunits of RNase P are also part of the RNase MRP complex. RNase MRP consists of a catalytic RNA moiety and about 8 protein subunits; POP1, POP7, RPP25, RPP30, RPP38, RPP40 and possibly also POP4 and POP5.

It localises to the nucleus. The protein resides in the nucleolus. In terms of biological role, component of ribonuclease P, a ribonucleoprotein complex that generates mature tRNA molecules by cleaving their 5'-ends. Also a component of the MRP ribonuclease complex, which cleaves pre-rRNA sequences. This Bos taurus (Bovine) protein is Ribonuclease P protein subunit p38 (RPP38).